We begin with the raw amino-acid sequence, 171 residues long: Shikimate kinase (171 aa).

14–19 contributes to the ATP binding site; sequence GAGKST. Residue serine 18 coordinates Mg(2+). Positions 36, 60, and 82 each coordinate substrate. Arginine 120 contributes to the ATP binding site. Substrate is bound at residue arginine 139. Glutamine 156 is a binding site for ATP.

The protein belongs to the shikimate kinase family. Monomer. Requires Mg(2+) as cofactor.

Its subcellular location is the cytoplasm. The catalysed reaction is shikimate + ATP = 3-phosphoshikimate + ADP + H(+). It functions in the pathway metabolic intermediate biosynthesis; chorismate biosynthesis; chorismate from D-erythrose 4-phosphate and phosphoenolpyruvate: step 5/7. Functionally, catalyzes the specific phosphorylation of the 3-hydroxyl group of shikimic acid using ATP as a cosubstrate. This chain is Shikimate kinase, found in Shewanella baltica (strain OS195).